The following is a 1167-amino-acid chain: DNA-directed RNA polymerase subunit beta (1167 aa).

Residues 1 to 27 (MAVSPANQATAATTSAESRSEATGIPG) form a disordered region. Residues 9–23 (ATAATTSAESRSEAT) are compositionally biased toward low complexity.

This sequence belongs to the RNA polymerase beta chain family. As to quaternary structure, the RNAP catalytic core consists of 2 alpha, 1 beta, 1 beta' and 1 omega subunit. When a sigma factor is associated with the core the holoenzyme is formed, which can initiate transcription.

The catalysed reaction is RNA(n) + a ribonucleoside 5'-triphosphate = RNA(n+1) + diphosphate. Its function is as follows. DNA-dependent RNA polymerase catalyzes the transcription of DNA into RNA using the four ribonucleoside triphosphates as substrates. This Amycolatopsis mediterranei (strain S699) (Nocardia mediterranei) protein is DNA-directed RNA polymerase subunit beta.